Reading from the N-terminus, the 390-residue chain is GTPase Obg (390 aa).

The region spanning 1 to 159 is the Obg domain; that stretch reads MKFVDEASIL…RELLLELMLL (159 aa). Positions 127-147 are disordered; sequence NTRFKSSVNRTPRQKTNGTPG. Polar residues predominate over residues 129–145; sequence RFKSSVNRTPRQKTNGT. In terms of domain architecture, OBG-type G spans 160–333; it reads ADVGMLGMPN…LCWDVMTFIL (174 aa). GTP is bound by residues 166-173, 191-195, 213-216, 283-286, and 314-316; these read GMPNAGKS, FTTLV, DIPG, NKID, and SAA. 2 residues coordinate Mg(2+): Ser-173 and Thr-193.

Belongs to the TRAFAC class OBG-HflX-like GTPase superfamily. OBG GTPase family. As to quaternary structure, monomer. Mg(2+) is required as a cofactor.

The protein resides in the cytoplasm. Functionally, an essential GTPase which binds GTP, GDP and possibly (p)ppGpp with moderate affinity, with high nucleotide exchange rates and a fairly low GTP hydrolysis rate. Plays a role in control of the cell cycle, stress response, ribosome biogenesis and in those bacteria that undergo differentiation, in morphogenesis control. The chain is GTPase Obg from Shigella sonnei (strain Ss046).